Consider the following 223-residue polypeptide: ATP-dependent dethiobiotin synthetase BioD (223 aa).

Threonine 16 is a Mg(2+) binding site. Lysine 37 is a catalytic residue. Position 41 (serine 41) interacts with substrate. 2 residues coordinate Mg(2+): aspartate 50 and glutamate 111. Residues aspartate 50, 111 to 114, and 171 to 172 each bind ATP; these read EGAG and NR.

This sequence belongs to the dethiobiotin synthetase family. Homodimer. Requires Mg(2+) as cofactor.

It localises to the cytoplasm. The catalysed reaction is (7R,8S)-7,8-diammoniononanoate + CO2 + ATP = (4R,5S)-dethiobiotin + ADP + phosphate + 3 H(+). It participates in cofactor biosynthesis; biotin biosynthesis; biotin from 7,8-diaminononanoate: step 1/2. Functionally, catalyzes a mechanistically unusual reaction, the ATP-dependent insertion of CO2 between the N7 and N8 nitrogen atoms of 7,8-diaminopelargonic acid (DAPA, also called 7,8-diammoniononanoate) to form a ureido ring. This is ATP-dependent dethiobiotin synthetase BioD from Anaeromyxobacter dehalogenans (strain 2CP-C).